Here is a 346-residue protein sequence, read N- to C-terminus: 3-isopropylmalate dehydrogenase (346 aa).

An NAD(+)-binding site is contributed by 76-87; sequence GPKWTDPNNRPE. Substrate-binding residues include R94, R104, R132, and D217. Residues D217, D241, and D245 each contribute to the Mg(2+) site. 275–287 provides a ligand contact to NAD(+); that stretch reads GSAPDIANQDIAN.

This sequence belongs to the isocitrate and isopropylmalate dehydrogenases family. LeuB type 1 subfamily. As to quaternary structure, homodimer. Requires Mg(2+) as cofactor. The cofactor is Mn(2+).

It is found in the cytoplasm. The catalysed reaction is (2R,3S)-3-isopropylmalate + NAD(+) = 4-methyl-2-oxopentanoate + CO2 + NADH. It functions in the pathway amino-acid biosynthesis; L-leucine biosynthesis; L-leucine from 3-methyl-2-oxobutanoate: step 3/4. In terms of biological role, catalyzes the oxidation of 3-carboxy-2-hydroxy-4-methylpentanoate (3-isopropylmalate) to 3-carboxy-4-methyl-2-oxopentanoate. The product decarboxylates to 4-methyl-2 oxopentanoate. This Staphylococcus saprophyticus subsp. saprophyticus (strain ATCC 15305 / DSM 20229 / NCIMB 8711 / NCTC 7292 / S-41) protein is 3-isopropylmalate dehydrogenase.